Reading from the N-terminus, the 119-residue chain is Thrombin-like enzyme TLBan (119 aa).

In terms of domain architecture, Peptidase S1 spans 1-112 (VIGGDECNIN…YLLWIQSIIA (112 aa)). Active-site charge relay system residues include His40 and Asp59. Cys54 and Cys118 are disulfide-bonded.

Monomer. Contains both N-linked carbohydrates and sialic acid. As to expression, expressed by the venom gland.

It is found in the secreted. With respect to regulation, strongly inhibited by PMSF and slightly inhibited by EDTA and soybean trypsin inhibitor. In terms of biological role, thrombin-like snake venom serine protease, with high clotting activity in vitro. Also has fibrinogenolytic ability, showing a fast degradation of fibrinogen Aalpha chain (FGA), a slow degradation of Bbeta chain (FGB) and no degradation of gamma chain. Also causes platelet aggregation in platelet rich plasma (PRP) and washed platelet suspension. The sequence is that of Thrombin-like enzyme TLBan from Bothrocophias andianus (Andean lancehead).